A 467-amino-acid polypeptide reads, in one-letter code: Asparagine--tRNA ligase (467 aa).

This sequence belongs to the class-II aminoacyl-tRNA synthetase family. Homodimer.

The protein resides in the cytoplasm. It carries out the reaction tRNA(Asn) + L-asparagine + ATP = L-asparaginyl-tRNA(Asn) + AMP + diphosphate + H(+). This chain is Asparagine--tRNA ligase, found in Actinobacillus succinogenes (strain ATCC 55618 / DSM 22257 / CCUG 43843 / 130Z).